Reading from the N-terminus, the 79-residue chain is MAKSDIHPKWYPEAKVYCNGQVVMTVGSTKPELHVDVWSGNHPFYTGTQKIIDTEGRVERFLRKYGMSSTQTSGEQTKK.

It belongs to the bacterial ribosomal protein bL31 family. Type A subfamily. Part of the 50S ribosomal subunit.

In terms of biological role, binds the 23S rRNA. The polypeptide is Large ribosomal subunit protein bL31 (Nostoc sp. (strain PCC 7120 / SAG 25.82 / UTEX 2576)).